Consider the following 193-residue polypeptide: Probable GTP-binding protein EngB (193 aa).

Residues 22 to 193 enclose the EngB-type G domain; sequence GLPEFAFAGR…LIAVLESYLA (172 aa). Residues 30 to 37, 57 to 61, 75 to 78, 142 to 145, and 173 to 175 each bind GTP; these read GRSNVGKS, GKTQG, DLPG, TKID, and FSS. The Mg(2+) site is built by Ser37 and Thr59.

This sequence belongs to the TRAFAC class TrmE-Era-EngA-EngB-Septin-like GTPase superfamily. EngB GTPase family. It depends on Mg(2+) as a cofactor.

Functionally, necessary for normal cell division and for the maintenance of normal septation. The protein is Probable GTP-binding protein EngB of Desulfotalea psychrophila (strain LSv54 / DSM 12343).